Here is a 276-residue protein sequence, read N- to C-terminus: Aldo-keto reductase Mjls_1919 (276 aa).

The active-site Proton donor is the Tyr-50. NADPH contacts are provided by Leu-190, Ile-228, Lys-230, Ser-231, Val-232, Arg-236, Ser-239, and Asn-240.

This sequence belongs to the aldo/keto reductase family.

In Mycobacterium sp. (strain JLS), this protein is Aldo-keto reductase Mjls_1919.